The sequence spans 325 residues: mRNA decay activator protein ZFP36 (325 aa).

The tract at residues 1–15 (MDLAAIYKSLLSLSP) is necessary for nuclear export. Residues 1 to 98 (MDLAAIYKSL…PTSPTATPTT (98 aa)) are necessary and sufficient for the association with mRNA decay enzymes and mRNA decay activation. Necessary for localization of ARE-containing mRNAs to processing bodies (PBs) stretches follow at residues 1–172 (MDLA…DLAA) and 98–325 (TSSR…SVSE). Over residues 15-48 (PELPSDLGETESSTSWASSGPWSLSSSDSSLPEA) the composition is skewed to low complexity. Residues 15–101 (PELPSDLGET…PTATPTTSSR (87 aa)) form a disordered region. Position 58 is a phosphoserine; by MAPKAPK2 (Ser-58). Ser-64 carries the phosphoserine modification. The stretch at 69-73 (PPPPG) is one P-P-P-P-G repeat. Residues 75-101 (APLAPRPSSELSPSPTSPTATPTTSSR) are compositionally biased toward low complexity. 2 positions are modified to phosphoserine: Ser-86 and Ser-88. Thr-90 carries the post-translational modification Phosphothreonine. Ser-91 bears the Phosphoserine mark. Residues 93–166 (TATPTTSSRY…GSRCHFIHNP (74 aa)) form a necessary for nuclear localization region. A necessary for RNA-binding region spans residues 95–171 (TPTTSSRYKT…FIHNPSEDLA (77 aa)). 2 C3H1-type zinc fingers span residues 101–129 (RYKTELCRTFSESGRCRYGAKCQFAHGLG) and 139–167 (KYKTELCHKFYLQGRCPYGSRCHFIHNPS). Residues 101–192 (RYKTELCRTF…ISFSGLPSGR (92 aa)) are necessary for interaction with PABPN1. Ser-167 is subject to Phosphoserine. The segment at 172 to 325 (APGHPHVLRQ…PIFNRISVSE (154 aa)) is necessary for mRNA decay activation. Ser-184 carries the post-translational modification Phosphoserine; by MAPKAPK2. 2 disordered regions span residues 185 to 248 (FSGL…TPAC) and 260 to 325 (VWGP…SVSE). At Ser-195 the chain carries Phosphoserine. The stretch at 196–200 (PPPAS) is one P-P-P-P-G repeat. Over residues 204 to 214 (PSVPSWSFSPS) the composition is skewed to low complexity. Ser-216 is subject to Phosphoserine. Residues 217–222 (PPPPPG) form a P-P-P-P-G repeat. At Ser-227 the chain carries Phosphoserine; by MAPK1; in vitro. Residues Ser-275, Ser-295, and Ser-322 each carry the phosphoserine modification. The segment covering 285-295 (SSGSSLGGSDS) has biased composition (low complexity). The tract at residues 311–325 (APRRLPIFNRISVSE) is interaction with CNOT1.

Associates with cytoplasmic CCR4-NOT and PAN2-PAN3 deadenylase complexes to trigger ARE-containing mRNA deadenylation and decay processes. Part of a mRNA decay activation complex at least composed of poly(A)-specific exoribonucleases CNOT6, EXOSC2 and XRN1 and mRNA-decapping enzymes DCP1A and DCP2. Associates with the RNA exosome complex. Interacts (via phosphorylated form) with 14-3-3 proteins; these interactions promote exclusion of ZFP36 from cytoplasmic stress granules in response to arsenite treatment in a MAPKAPK2-dependent manner and does not prevent CCR4-NOT deadenylase complex recruitment or ZFP36-induced ARE-containing mRNA deadenylation and decay processes. Interacts with 14-3-3 proteins; these interactions occur in response to rapamycin in an Akt-dependent manner. Interacts with AGO2 and AGO4. Interacts (via C-terminus) with CNOT1; this interaction occurs in a RNA-independent manner and induces mRNA deadenylation. Interacts (via N-terminus) with CNOT6. Interacts with CNOT6L. Interacts (via C-terminus) with CNOT7; this interaction occurs in a RNA-independent manner, induces mRNA deadenylation and is inhibited in a phosphorylation MAPKAPK2-dependent manner. Interacts (via unphosphorylated form) with CNOT8; this interaction occurs in a RNA-independent manner and is inhibited in a phosphorylation MAPKAPK2-dependent manner. Interacts with DCP1A. Interacts (via N-terminus) with DCP2. Interacts with EDC3. Interacts (via N-terminus) with EXOSC2. Interacts with heat shock 70 kDa proteins. Interacts with KHSRP; this interaction increases upon cytokine-induced treatment. Interacts with MAP3K4; this interaction enhances the association with SH3KBP1/CIN85. Interacts with MAPKAPK2; this interaction occurs upon skeletal muscle satellite cell activation. Interacts with NCL. Interacts with NUP214; this interaction increases upon lipopolysaccharide (LPS) stimulation. Interacts with PABPC1; this interaction occurs in a RNA-dependent manner. Interacts (via hypophosphorylated form) with PABPN1 (via RRM domain and C-terminal arginine-rich region); this interaction occurs in the nucleus in a RNA-independent manner, decreases in presence of single-stranded poly(A) RNA-oligomer and in a p38 MAPK-dependent-manner and inhibits nuclear poly(A) tail synthesis. Interacts with PAN2. Interacts (via C3H1-type zinc finger domains) with PKM. Interacts (via C3H1-type zinc finger domains) with nuclear RNA poly(A) polymerase. Interacts with PPP2CA; this interaction occurs in LPS-stimulated cells and induces ZFP36 dephosphorylation, and hence may promote ARE-containing mRNAs decay. Interacts (via C-terminus) with PRR5L (via C-terminus); this interaction may accelerate ZFP36-mediated mRNA decay during stress. Interacts (via C-terminus) with SFN; this interaction occurs in a phosphorylation-dependent manner. Interacts (via extreme C-terminal region) with SH3KBP1/CIN85 (via SH3 domains); this interaction enhances MAP3K4-induced phosphorylation of ZFP36 at Ser-64 and Ser-91 and does not alter neither ZFP36 binding to ARE-containing transcripts nor TNF-alpha mRNA decay. Interacts with XRN1. Interacts (via C-terminus and Ser-184 phosphorylated form) with YWHAB; this interaction occurs in a p38/MAPKAPK2-dependent manner, increases cytoplasmic localization of ZFP36 and protects ZFP36 from Ser-184 dephosphorylation by serine/threonine phosphatase 2A, and hence may be crucial for stabilizing ARE-containing mRNAs. Interacts (via phosphorylated form) with YWHAE. Interacts (via C-terminus) with YWHAG; this interaction occurs in a phosphorylation-dependent manner. Interacts with YWHAH; this interaction occurs in a phosphorylation-dependent manner. Interacts with YWHAQ; this interaction occurs in a phosphorylation-dependent manner. Interacts with (via C-terminus) YWHAZ; this interaction occurs in a phosphorylation-dependent manner. Does not interact with SH3KBP1. Interacts (via P-P-P-P-G repeats) with GIGYF2; the interaction is direct. Post-translationally, phosphorylated. Phosphorylation at serine and/or threonine residues occurs in a p38 MAPK- and MAPKAPK2-dependent manner. Phosphorylated by MAPKAPK2 at Ser-58 and Ser-184; phosphorylation increases its stability and cytoplasmic localization, promotes binding to 14-3-3 adapter proteins and inhibits the recruitment of cytoplasmic CCR4-NOT and PAN2-PAN3 deadenylase complexes to the mRNA decay machinery, thereby inhibiting ZFP36-induced ARE-containing mRNA deadenylation and decay processes. Phosphorylation by MAPKAPK2 does not impair ARE-containing RNA-binding. Phosphorylated in a MAPKAPK2- and p38 MAPK-dependent manner upon skeletal muscle satellite cell activation; this phosphorylation inhibits ZFP36-mediated mRNA decay activity, and hence stabilizes MYOD1 mRNA. Phosphorylated by MAPK1 upon mitogen stimulation. Phosphorylated at Ser-64 and Ser-91; these phosphorylations increase in a SH3KBP1-dependent manner. Phosphorylated at serine and threonine residues in a pyruvate kinase PKM- and p38 MAPK-dependent manner. Phosphorylation at Ser-58 may participate in the PKM-mediated degradation of ZFP36 in a p38 MAPK-dependent manner. Dephosphorylated by serine/threonine phosphatase 2A at Ser-184. In terms of processing, ubiquitinated; pyruvate kinase (PKM)-dependent ubiquitination leads to proteasomal degradation through a p38 MAPK signaling pathway.

The protein resides in the nucleus. It localises to the cytoplasm. Its subcellular location is the cytoplasmic granule. The protein localises to the P-body. Its function is as follows. Zinc-finger RNA-binding protein that destabilizes numerous cytoplasmic AU-rich element (ARE)-containing mRNA transcripts by promoting their poly(A) tail removal or deadenylation, and hence provide a mechanism for attenuating protein synthesis. Acts as an 3'-untranslated region (UTR) ARE mRNA-binding adapter protein to communicate signaling events to the mRNA decay machinery. Recruits deadenylase CNOT7 (and probably the CCR4-NOT complex) via association with CNOT1, and hence promotes ARE-mediated mRNA deadenylation. Also functions by recruiting components of the cytoplasmic RNA decay machinery to the bound ARE-containing mRNAs. Self regulates by destabilizing its own mRNA. Binds to 3'-UTR ARE of numerous mRNAs. Also binds to ARE of its own mRNA. Plays a role in anti-inflammatory responses; suppresses tumor necrosis factor (TNF)-alpha production by stimulating ARE-mediated TNF-alpha mRNA decay and several other inflammatory ARE-containing mRNAs in interferon (IFN)- and/or lipopolysaccharide (LPS)-induced macrophages. Also plays a role in the regulation of dendritic cell maturation at the post-transcriptional level, and hence operates as part of a negative feedback loop to limit the inflammatory response. Promotes ARE-mediated mRNA decay of hypoxia-inducible factor HIF1A mRNA during the response of endothelial cells to hypoxia. Positively regulates early adipogenesis of preadipocytes by promoting ARE-mediated mRNA decay of immediate early genes (IEGs). Negatively regulates hematopoietic/erythroid cell differentiation by promoting ARE-mediated mRNA decay of the transcription factor STAT5B mRNA. Plays a role in maintaining skeletal muscle satellite cell quiescence by promoting ARE-mediated mRNA decay of the myogenic determination factor MYOD1 mRNA. Also associates with and regulates the expression of non-ARE-containing target mRNAs at the post-transcriptional level, such as MHC class I mRNAs. Participates in association with argonaute RISC catalytic components in the ARE-mediated mRNA decay mechanism; assists microRNA (miRNA) targeting ARE-containing mRNAs. May also play a role in the regulation of cytoplasmic mRNA decapping; enhances decapping of ARE-containing RNAs, in vitro. Involved in the delivery of target ARE-mRNAs to processing bodies (PBs). In addition to its cytosolic mRNA-decay function, affects nuclear pre-mRNA processing. Negatively regulates nuclear poly(A)-binding protein PABPN1-stimulated polyadenylation activity on ARE-containing pre-mRNA during LPS-stimulated macrophages. Also involved in the regulation of stress granule (SG) and P-body (PB) formation and fusion. Plays a role in the regulation of keratinocyte proliferation, differentiation and apoptosis. Plays a role as a tumor suppressor by inhibiting cell proliferation in breast cancer cells. The protein is mRNA decay activator protein ZFP36 of Ovis aries (Sheep).